Consider the following 179-residue polypeptide: ATP synthase subunit delta (179 aa).

Belongs to the ATPase delta chain family. F-type ATPases have 2 components, F(1) - the catalytic core - and F(0) - the membrane proton channel. F(1) has five subunits: alpha(3), beta(3), gamma(1), delta(1), epsilon(1). F(0) has three main subunits: a(1), b(2) and c(10-14). The alpha and beta chains form an alternating ring which encloses part of the gamma chain. F(1) is attached to F(0) by a central stalk formed by the gamma and epsilon chains, while a peripheral stalk is formed by the delta and b chains.

It is found in the cell membrane. F(1)F(0) ATP synthase produces ATP from ADP in the presence of a proton or sodium gradient. F-type ATPases consist of two structural domains, F(1) containing the extramembraneous catalytic core and F(0) containing the membrane proton channel, linked together by a central stalk and a peripheral stalk. During catalysis, ATP synthesis in the catalytic domain of F(1) is coupled via a rotary mechanism of the central stalk subunits to proton translocation. In terms of biological role, this protein is part of the stalk that links CF(0) to CF(1). It either transmits conformational changes from CF(0) to CF(1) or is implicated in proton conduction. The chain is ATP synthase subunit delta from Mycoplasmopsis pulmonis (strain UAB CTIP) (Mycoplasma pulmonis).